Here is a 339-residue protein sequence, read N- to C-terminus: Serine/threonine-protein kinase pdik1l-B (339 aa).

The Protein kinase domain maps to 8-332 (YDLIREVGRG…LELKLIQIAF (325 aa)). ATP contacts are provided by residues 14–22 (VGRGSYGLV) and lysine 37. Aspartate 164 acts as the Proton acceptor in catalysis.

Belongs to the protein kinase superfamily. Ser/Thr protein kinase family.

It localises to the nucleus. The enzyme catalyses L-seryl-[protein] + ATP = O-phospho-L-seryl-[protein] + ADP + H(+). It carries out the reaction L-threonyl-[protein] + ATP = O-phospho-L-threonyl-[protein] + ADP + H(+). The protein is Serine/threonine-protein kinase pdik1l-B (pdik1-b) of Xenopus laevis (African clawed frog).